Reading from the N-terminus, the 496-residue chain is Probable CtpA-like serine protease (496 aa).

Over residues 1–16 (MDDKQHTTSSDDERAE) the composition is skewed to basic and acidic residues. A disordered region spans residues 1–27 (MDDKQHTTSSDDERAENATSNQDQQTN). Over residues 17–27 (NATSNQDQQTN) the composition is skewed to polar residues. Residues 39-59 (FISILIGTIIITAVITVVAYI) form a helical membrane-spanning segment. A PDZ domain is found at 124–206 (TKSFNEGVSG…TEVTLTVQRG (83 aa)). Catalysis depends on charge relay system residues serine 329, aspartate 340, and lysine 354.

It belongs to the peptidase S41A family.

The protein resides in the cell membrane. The chain is Probable CtpA-like serine protease from Staphylococcus aureus (strain MRSA252).